Reading from the N-terminus, the 284-residue chain is Bifunctional protein FolD (284 aa).

NADP(+) is bound by residues 165 to 167 (GRS) and S190.

The protein belongs to the tetrahydrofolate dehydrogenase/cyclohydrolase family. In terms of assembly, homodimer.

The enzyme catalyses (6R)-5,10-methylene-5,6,7,8-tetrahydrofolate + NADP(+) = (6R)-5,10-methenyltetrahydrofolate + NADPH. It carries out the reaction (6R)-5,10-methenyltetrahydrofolate + H2O = (6R)-10-formyltetrahydrofolate + H(+). The protein operates within one-carbon metabolism; tetrahydrofolate interconversion. Catalyzes the oxidation of 5,10-methylenetetrahydrofolate to 5,10-methenyltetrahydrofolate and then the hydrolysis of 5,10-methenyltetrahydrofolate to 10-formyltetrahydrofolate. The protein is Bifunctional protein FolD of Streptococcus uberis (strain ATCC BAA-854 / 0140J).